The primary structure comprises 654 residues: Smc-like protein Sph3 (654 aa).

Coiled coils occupy residues 135–290 (TDAI…LQTV) and 341–503 (IRGT…LTAA).

The protein belongs to the Sph1/Sph2 family.

In terms of biological role, involved in cell-shape determination. Required for the formation of rods and wild-type-like motility. The sequence is that of Smc-like protein Sph3 from Haloferax volcanii (strain ATCC 29605 / DSM 3757 / JCM 8879 / NBRC 14742 / NCIMB 2012 / VKM B-1768 / DS2) (Halobacterium volcanii).